A 518-amino-acid polypeptide reads, in one-letter code: Phenylacetate 2-hydroxylase (518 aa).

Cysteine 437 is a binding site for heme.

The protein belongs to the cytochrome P450 family.

The catalysed reaction is 2-phenylacetate + reduced [NADPH--hemoprotein reductase] + O2 = (2-hydroxyphenyl)acetate + oxidized [NADPH--hemoprotein reductase] + H2O + H(+). It functions in the pathway aromatic compound metabolism; phenylacetate degradation. Functionally, catalyzes the hydroxylation of phenylacetate to 2-hydroxyphenylacetate in the homogentisate pathway. The homogentisate pathway is used to catabolize phenylacetate and use it as a carbon source. Can also catalyze the hydroxylation of 3-hydroxyphenylacetate to 2,5-dihydroxyphenylacetate (homogentisate) at low efficiency. The sequence is that of Phenylacetate 2-hydroxylase (phacA) from Emericella nidulans (Aspergillus nidulans).